A 455-amino-acid polypeptide reads, in one-letter code: Bifunctional protein GlmU (455 aa).

Residues 1–228 (MTQPLHVIIL…AQEAEGANDP (228 aa)) are pyrophosphorylase. Residues 10 to 13 (LAAG), Lys-24, Gln-76, 81 to 82 (GT), 103 to 105 (YGD), Gly-138, Glu-153, Asn-168, and Asn-226 contribute to the UDP-N-acetyl-alpha-D-glucosamine site. Asp-105 contacts Mg(2+). Asn-226 provides a ligand contact to Mg(2+). Residues 229–249 (WQLSQLERAWQRRAVRALCAQ) are linker. An N-acetyltransferase region spans residues 250 to 455 (GARVRDPARL…DGWKRPLKKS (206 aa)). UDP-N-acetyl-alpha-D-glucosamine-binding residues include Arg-332 and Lys-350. His-362 acts as the Proton acceptor in catalysis. Residues Tyr-365 and Asn-376 each contribute to the UDP-N-acetyl-alpha-D-glucosamine site. Residues Ala-379, 385 to 386 (NY), Ser-404, Ala-422, and Arg-439 contribute to the acetyl-CoA site.

It in the N-terminal section; belongs to the N-acetylglucosamine-1-phosphate uridyltransferase family. The protein in the C-terminal section; belongs to the transferase hexapeptide repeat family. In terms of assembly, homotrimer. The cofactor is Mg(2+).

It localises to the cytoplasm. It catalyses the reaction alpha-D-glucosamine 1-phosphate + acetyl-CoA = N-acetyl-alpha-D-glucosamine 1-phosphate + CoA + H(+). The enzyme catalyses N-acetyl-alpha-D-glucosamine 1-phosphate + UTP + H(+) = UDP-N-acetyl-alpha-D-glucosamine + diphosphate. The protein operates within nucleotide-sugar biosynthesis; UDP-N-acetyl-alpha-D-glucosamine biosynthesis; N-acetyl-alpha-D-glucosamine 1-phosphate from alpha-D-glucosamine 6-phosphate (route II): step 2/2. It functions in the pathway nucleotide-sugar biosynthesis; UDP-N-acetyl-alpha-D-glucosamine biosynthesis; UDP-N-acetyl-alpha-D-glucosamine from N-acetyl-alpha-D-glucosamine 1-phosphate: step 1/1. Its pathway is bacterial outer membrane biogenesis; LPS lipid A biosynthesis. Catalyzes the last two sequential reactions in the de novo biosynthetic pathway for UDP-N-acetylglucosamine (UDP-GlcNAc). The C-terminal domain catalyzes the transfer of acetyl group from acetyl coenzyme A to glucosamine-1-phosphate (GlcN-1-P) to produce N-acetylglucosamine-1-phosphate (GlcNAc-1-P), which is converted into UDP-GlcNAc by the transfer of uridine 5-monophosphate (from uridine 5-triphosphate), a reaction catalyzed by the N-terminal domain. The sequence is that of Bifunctional protein GlmU from Stenotrophomonas maltophilia (strain R551-3).